Reading from the N-terminus, the 200-residue chain is Glycerol-3-phosphate acyltransferase (200 aa).

The next 5 membrane-spanning stretches (helical) occupy residues 2 to 22 (FNIP…AVIV), 51 to 71 (KAAA…VLLA), 84 to 104 (AIAA…FFGF), 114 to 134 (LGVL…IWLV), and 158 to 178 (LFFM…ILVL).

Belongs to the PlsY family. As to quaternary structure, probably interacts with PlsX.

Its subcellular location is the cell inner membrane. It carries out the reaction an acyl phosphate + sn-glycerol 3-phosphate = a 1-acyl-sn-glycero-3-phosphate + phosphate. It participates in lipid metabolism; phospholipid metabolism. Functionally, catalyzes the transfer of an acyl group from acyl-phosphate (acyl-PO(4)) to glycerol-3-phosphate (G3P) to form lysophosphatidic acid (LPA). This enzyme utilizes acyl-phosphate as fatty acyl donor, but not acyl-CoA or acyl-ACP. The chain is Glycerol-3-phosphate acyltransferase from Neisseria gonorrhoeae (strain ATCC 700825 / FA 1090).